Here is a 208-residue protein sequence, read N- to C-terminus: MASIRWLMGSRLSRFVCPFAQLVRQPVLRYVRPPVRALHRGSVRRAAEKNPLNSRARAVEQQYITELDKADALMLRKSHETGFLSWFRNGLLATGIGVIAFVQSDVGREAGYAFFILGGMCVSFGGASYVTSLLSLRRIMLLSLPAVLLHTAVVSSAALFWLCAVSLYIGRLEVEIIHDEDDEEHGADESSECAECRARRDREKGQDK.

A mitochondrion-targeting transit peptide spans 1–45 (MASIRWLMGSRLSRFVCPFAQLVRQPVLRYVRPPVRALHRGSVRR). 3 helical membrane-spanning segments follow: residues 82–102 (GFLS…IAFV), 110–130 (AGYA…ASYV), and 147–167 (VLLH…AVSL). The segment covering 181-192 (DDEEHGADESSE) has biased composition (acidic residues). A disordered region spans residues 181–208 (DDEEHGADESSECAECRARRDREKGQDK). Basic and acidic residues predominate over residues 194-208 (AECRARRDREKGQDK).

It belongs to the TMEM160 family.

The protein resides in the mitochondrion inner membrane. In Danio rerio (Zebrafish), this protein is Transmembrane protein 160.